A 376-amino-acid polypeptide reads, in one-letter code: Guanine nucleotide-binding protein G(s) subunit alpha (376 aa).

Glycine 2 carries the N-palmitoyl glycine lipid modification. Residue cysteine 3 is the site of S-palmitoyl cysteine attachment. The G-alpha domain occupies 36–376 (GTHRLLLLGA…RMHLRQYELL (341 aa)). The tract at residues 39-52 (RLLLLGAGESGKST) is G1 motif. GTP-binding positions include 44–51 (GAGESGKS), 180–186 (LRCRVLT), 205–209 (DVGGQ), 274–277 (NKQD), and alanine 348. Mg(2+)-binding residues include serine 51 and threonine 186. Positions 178–186 (DILRCRVLT) are G2 motif. Residues 201 to 210 (FHMFDVGGQR) are G3 motif. Residues 270–277 (ILFLNKQD) form a G4 motif region. The interval 346–351 (TCAVDT) is G5 motif.

This sequence belongs to the G-alpha family. G(s) subfamily. As to quaternary structure, g proteins are composed of 3 units; alpha, beta and gamma. The alpha chain contains the guanine nucleotide binding site.

In terms of biological role, guanine nucleotide-binding proteins (G proteins) are involved as modulators or transducers in various transmembrane signaling systems. The G(s) protein is involved in hormonal regulation of adenylate cyclase: it activates the cyclase in response to beta-adrenergic stimuli. The chain is Guanine nucleotide-binding protein G(s) subunit alpha from Lymnaea stagnalis (Great pond snail).